Consider the following 603-residue polypeptide: Arginine--tRNA ligase (603 aa).

The 'HIGH' region signature appears at 143–153 (PNIAKEMHVGH).

Belongs to the class-I aminoacyl-tRNA synthetase family. In terms of assembly, monomer.

Its subcellular location is the cytoplasm. The catalysed reaction is tRNA(Arg) + L-arginine + ATP = L-arginyl-tRNA(Arg) + AMP + diphosphate. This is Arginine--tRNA ligase from Prochlorococcus marinus (strain MIT 9211).